The following is a 234-amino-acid chain: 1-(5-phosphoribosyl)-5-[(5-phosphoribosylamino)methylideneamino] imidazole-4-carboxamide isomerase (234 aa).

The active-site Proton acceptor is the Asp-9. Asp-131 serves as the catalytic Proton donor.

The protein belongs to the HisA/HisF family.

It is found in the cytoplasm. It carries out the reaction 1-(5-phospho-beta-D-ribosyl)-5-[(5-phospho-beta-D-ribosylamino)methylideneamino]imidazole-4-carboxamide = 5-[(5-phospho-1-deoxy-D-ribulos-1-ylimino)methylamino]-1-(5-phospho-beta-D-ribosyl)imidazole-4-carboxamide. Its pathway is amino-acid biosynthesis; L-histidine biosynthesis; L-histidine from 5-phospho-alpha-D-ribose 1-diphosphate: step 4/9. The polypeptide is 1-(5-phosphoribosyl)-5-[(5-phosphoribosylamino)methylideneamino] imidazole-4-carboxamide isomerase (Staphylococcus epidermidis (strain ATCC 12228 / FDA PCI 1200)).